We begin with the raw amino-acid sequence, 411 residues long: Citrate synthase (411 aa).

Active-site residues include histidine 304 and aspartate 363.

This sequence belongs to the citrate synthase family.

It catalyses the reaction oxaloacetate + acetyl-CoA + H2O = citrate + CoA + H(+). The protein operates within carbohydrate metabolism; tricarboxylic acid cycle; isocitrate from oxaloacetate: step 1/2. This is Citrate synthase (gltA) from Rickettsia canadensis.